The sequence spans 361 residues: Queuine tRNA-ribosyltransferase (361 aa).

The Proton acceptor role is filled by Asp92. Residues 92-96, Asp146, Gln189, and Gly216 each bind substrate; that span reads DSGGF. Positions 247–253 are RNA binding; it reads GVGKPAD. Catalysis depends on Asp266, which acts as the Nucleophile. The segment at 271-275 is RNA binding; important for wobble base 34 recognition; the sequence is TRSGR. Zn(2+) is bound by residues Cys304, Cys306, Cys309, and His335.

The protein belongs to the queuine tRNA-ribosyltransferase family. Homodimer. Within each dimer, one monomer is responsible for RNA recognition and catalysis, while the other monomer binds to the replacement base PreQ1. Zn(2+) serves as cofactor.

The catalysed reaction is 7-aminomethyl-7-carbaguanine + guanosine(34) in tRNA = 7-aminomethyl-7-carbaguanosine(34) in tRNA + guanine. It participates in tRNA modification; tRNA-queuosine biosynthesis. Functionally, catalyzes the base-exchange of a guanine (G) residue with the queuine precursor 7-aminomethyl-7-deazaguanine (PreQ1) at position 34 (anticodon wobble position) in tRNAs with GU(N) anticodons (tRNA-Asp, -Asn, -His and -Tyr). Catalysis occurs through a double-displacement mechanism. The nucleophile active site attacks the C1' of nucleotide 34 to detach the guanine base from the RNA, forming a covalent enzyme-RNA intermediate. The proton acceptor active site deprotonates the incoming PreQ1, allowing a nucleophilic attack on the C1' of the ribose to form the product. After dissociation, two additional enzymatic reactions on the tRNA convert PreQ1 to queuine (Q), resulting in the hypermodified nucleoside queuosine (7-(((4,5-cis-dihydroxy-2-cyclopenten-1-yl)amino)methyl)-7-deazaguanosine). In Rickettsia canadensis (strain McKiel), this protein is Queuine tRNA-ribosyltransferase.